Consider the following 559-residue polypeptide: Small ribosomal subunit protein bS1 (559 aa).

S1 motif domains are found at residues 21–87 (GSII…LSRE), 105–171 (SETV…VSRR), 192–260 (GIEI…LGLK), 277–347 (GIKL…LGLK), 364–434 (GIHV…LGIK), and 451–520 (GAII…LTFH).

The protein belongs to the bacterial ribosomal protein bS1 family.

In terms of biological role, binds mRNA; thus facilitating recognition of the initiation point. It is needed to translate mRNA with a short Shine-Dalgarno (SD) purine-rich sequence. This chain is Small ribosomal subunit protein bS1 (rpsA), found in Buchnera aphidicola subsp. Schizaphis graminum (strain Sg).